A 297-amino-acid chain; its full sequence is Myozenin-1 (297 aa).

A disordered region spans residues 1-34; sequence MPLSGTPAPNKKRKSSKLIMELTGGGQESSGLNL. Ser82 is modified (phosphoserine). The disordered stretch occupies residues 105-172; the sequence is FSYSKSSGGG…ALPDNQAGGE (68 aa). Over residues 118–128 the composition is skewed to low complexity; that stretch reads RSGSAGQYGSD. Residues 136–162 show a composition bias toward gly residues; that stretch reads SGSGSGSGSGPGSGGAGGPGGHSGRGG.

The protein belongs to the myozenin family. In terms of assembly, interacts with ACTN2, ACTN3, FLNA, FLNB, FLNC, LDB3, PPP3CA and TCAP. Interacts via its C-terminal region with MYOT.

It localises to the nucleus. Its subcellular location is the cell projection. The protein localises to the pseudopodium. Myozenins may serve as intracellular binding proteins involved in linking Z-disk proteins such as alpha-actinin, gamma-filamin, TCAP/telethonin, LDB3/ZASP and localizing calcineurin signaling to the sarcomere. Plays an important role in the modulation of calcineurin signaling. May play a role in myofibrillogenesis. The polypeptide is Myozenin-1 (MYOZ1) (Bos taurus (Bovine)).